A 387-amino-acid chain; its full sequence is Carbamoyl phosphate synthase small chain (387 aa).

The tract at residues 1 to 189 is CPSase; that stretch reads MIKSAILVLE…GLPEDKQEQD (189 aa). L-glutamine-binding residues include Ser47, Gly241, and Gly243. Residues 193–380 form the Glutamine amidotransferase type-1 domain; the sequence is HVVAYDFGAK…IELIEQYCQK (188 aa). Cys269 serves as the catalytic Nucleophile. Residues Leu270, Gln273, Asn311, Gly313, and Phe314 each coordinate L-glutamine. Catalysis depends on residues His353 and Glu355.

This sequence belongs to the CarA family. As to quaternary structure, composed of two chains; the small (or glutamine) chain promotes the hydrolysis of glutamine to ammonia, which is used by the large (or ammonia) chain to synthesize carbamoyl phosphate. Tetramer of heterodimers (alpha,beta)4.

The catalysed reaction is hydrogencarbonate + L-glutamine + 2 ATP + H2O = carbamoyl phosphate + L-glutamate + 2 ADP + phosphate + 2 H(+). The enzyme catalyses L-glutamine + H2O = L-glutamate + NH4(+). The protein operates within amino-acid biosynthesis; L-arginine biosynthesis; carbamoyl phosphate from bicarbonate: step 1/1. Its pathway is pyrimidine metabolism; UMP biosynthesis via de novo pathway; (S)-dihydroorotate from bicarbonate: step 1/3. Functionally, small subunit of the glutamine-dependent carbamoyl phosphate synthetase (CPSase). CPSase catalyzes the formation of carbamoyl phosphate from the ammonia moiety of glutamine, carbonate, and phosphate donated by ATP, constituting the first step of 2 biosynthetic pathways, one leading to arginine and/or urea and the other to pyrimidine nucleotides. The small subunit (glutamine amidotransferase) binds and cleaves glutamine to supply the large subunit with the substrate ammonia. The chain is Carbamoyl phosphate synthase small chain from Photorhabdus laumondii subsp. laumondii (strain DSM 15139 / CIP 105565 / TT01) (Photorhabdus luminescens subsp. laumondii).